Reading from the N-terminus, the 418-residue chain is Aspartate aminotransferase 1 (418 aa).

N6-(pyridoxal phosphate)lysine is present on Lys264.

It belongs to the class-I pyridoxal-phosphate-dependent aminotransferase family. In terms of assembly, homodimer. Pyridoxal 5'-phosphate is required as a cofactor. As to expression, nodules, roots, stems and leaves, in decreasing order of aspartate aminotransferase 1 concentration. Is the predominant aspartate aminotransferase isoenzyme in roots.

It localises to the cytoplasm. It catalyses the reaction L-aspartate + 2-oxoglutarate = oxaloacetate + L-glutamate. Its function is as follows. Important for the metabolism of amino acids and Krebs-cycle related organic acids. In plants, it is involved in nitrogen metabolism and in aspects of carbon and energy metabolism. This Medicago sativa (Alfalfa) protein is Aspartate aminotransferase 1 (AAT-1).